Consider the following 160-residue polypeptide: 3-hydroxyacyl-[acyl-carrier-protein] dehydratase FabZ (160 aa).

Residue His-63 is part of the active site.

It belongs to the thioester dehydratase family. FabZ subfamily.

The protein resides in the cytoplasm. It catalyses the reaction a (3R)-hydroxyacyl-[ACP] = a (2E)-enoyl-[ACP] + H2O. In terms of biological role, involved in unsaturated fatty acids biosynthesis. Catalyzes the dehydration of short chain beta-hydroxyacyl-ACPs and long chain saturated and unsaturated beta-hydroxyacyl-ACPs. The polypeptide is 3-hydroxyacyl-[acyl-carrier-protein] dehydratase FabZ (Xylella fastidiosa (strain M23)).